A 531-amino-acid polypeptide reads, in one-letter code: Protein SIS2 (531 aa).

Positions 1 to 20 are enriched in basic and acidic residues; the sequence is MPSDKDIKSPAQPKKEEEIP. Disordered stretches follow at residues 1–42, 88–127, 139–168, 180–261, and 461–531; these read MPSD…ANII, SPDS…KSPS, RPVR…EPSS, SLRA…DPRL, and YPED…TTNL. Over residues 155–168 the composition is skewed to polar residues; it reads LTPITSPQHSEPSS. The span at 183 to 198 shows a compositional bias: low complexity; that stretch reads ATTNSISSAAASNQST. Residues 204-213 show a composition bias toward gly residues; that stretch reads SGGGGGGGGA. The span at 214-249 shows a compositional bias: low complexity; the sequence is NTATSSNSTTSNTALAAQGTTTTTTTTNSNSNTTTT. Acidic residues-rich tracts occupy residues 462–472 and 481–514; these read PEDEDEDEADD and AIID…EEDP.

It belongs to the HFCD (homooligomeric flavin containing Cys decarboxylase) superfamily.

The protein localises to the nucleus. It localises to the cytoplasm. Functionally, may stimulate expression of certain genes that are periodically expressed during late G1. Also modulates the expression of the ENA1 ATPase. In Candida tropicalis (Yeast), this protein is Protein SIS2 (SIS2).